Consider the following 150-residue polypeptide: Arginine repressor (150 aa).

Belongs to the ArgR family.

Its subcellular location is the cytoplasm. Its pathway is amino-acid biosynthesis; L-arginine biosynthesis [regulation]. Regulates arginine biosynthesis genes. The sequence is that of Arginine repressor from Clostridium botulinum (strain Alaska E43 / Type E3).